The following is a 305-amino-acid chain: Protein FdhE homolog (305 aa).

This sequence belongs to the FdhE family.

The protein localises to the cytoplasm. Functionally, necessary for formate dehydrogenase activity. The protein is Protein FdhE homolog of Stutzerimonas stutzeri (strain A1501) (Pseudomonas stutzeri).